The following is a 411-amino-acid chain: Bifunctional protein GlmU (411 aa).

The tract at residues 1-204 is pyrophosphorylase; that stretch reads MDAIILCAGK…NGKLHGVELK (204 aa). Residues 6–9, glutamine 74, and glycine 79 contribute to the UTP site; that span reads LCAG. Positions 80, 130, 142, and 158 each coordinate N-acetyl-alpha-D-glucosamine 1-phosphate. The tract at residues 205-224 is linker; that stretch reads GYWNDIGHPWDVLSANNHFL. The interval 225–411 is N-acetyltransferase; sequence NKIISKVSGK…DELVITKKRN (187 aa). The Proton acceptor role is filled by histidine 308. 2 residues coordinate acetyl-CoA: alanine 384 and lysine 401.

In the N-terminal section; belongs to the N-acetylglucosamine-1-phosphate uridyltransferase family. The protein in the C-terminal section; belongs to the transferase hexapeptide repeat family.

The enzyme catalyses N-acetyl-alpha-D-glucosamine 1-phosphate + UTP + H(+) = UDP-N-acetyl-alpha-D-glucosamine + diphosphate. It catalyses the reaction alpha-D-glucosamine 1-phosphate + acetyl-CoA = N-acetyl-alpha-D-glucosamine 1-phosphate + CoA + H(+). The protein operates within nucleotide-sugar biosynthesis; UDP-N-acetyl-alpha-D-glucosamine biosynthesis; N-acetyl-alpha-D-glucosamine 1-phosphate from alpha-D-glucosamine 6-phosphate (route II): step 2/2. It functions in the pathway nucleotide-sugar biosynthesis; UDP-N-acetyl-alpha-D-glucosamine biosynthesis; UDP-N-acetyl-alpha-D-glucosamine from N-acetyl-alpha-D-glucosamine 1-phosphate: step 1/1. Its function is as follows. Catalyzes the last two sequential reactions in the de novo biosynthetic pathway for UDP-N-acetyl-glucosamine (UDP-GlcNAc). Responsible for the acetylation of GlcN-1-P to GlcNAc-1-P, and for the uridyl transfer from UTP to GlcNAc-1-P, to produce UDP-GlcNAc and pyrophosphate. This chain is Bifunctional protein GlmU, found in Methanococcus maripaludis (strain DSM 14266 / JCM 13030 / NBRC 101832 / S2 / LL).